The following is a 105-amino-acid chain: Ig lambda chain C region (105 aa).

One can recognise an Ig-like domain in the interval 2-100 (PKAAPTVNLF…EGTIVEKTVT (99 aa)). C27 and C86 are joined by a disulfide.

This is Ig lambda chain C region from Sus scrofa (Pig).